The sequence spans 255 residues: DNA repair protein RecO (255 aa).

It belongs to the RecO family.

In terms of biological role, involved in DNA repair and RecF pathway recombination. This chain is DNA repair protein RecO, found in Listeria monocytogenes serotype 4a (strain HCC23).